Here is a 285-residue protein sequence, read N- to C-terminus: Release factor glutamine methyltransferase (285 aa).

Residues aspartate 143 and asparagine 189 each coordinate S-adenosyl-L-methionine. 189–192 contacts substrate; that stretch reads NPPY.

The protein belongs to the protein N5-glutamine methyltransferase family. PrmC subfamily.

The enzyme catalyses L-glutaminyl-[peptide chain release factor] + S-adenosyl-L-methionine = N(5)-methyl-L-glutaminyl-[peptide chain release factor] + S-adenosyl-L-homocysteine + H(+). Methylates the class 1 translation termination release factors RF1/PrfA and RF2/PrfB on the glutamine residue of the universally conserved GGQ motif. The sequence is that of Release factor glutamine methyltransferase from Clostridium acetobutylicum (strain ATCC 824 / DSM 792 / JCM 1419 / IAM 19013 / LMG 5710 / NBRC 13948 / NRRL B-527 / VKM B-1787 / 2291 / W).